A 312-amino-acid polypeptide reads, in one-letter code: Taste receptor type 2 member 62 (312 aa).

The Extracellular segment spans residues 1–4 (MPSL). The helical transmembrane segment at 5–27 (PTLIFIAIFCLESLAAMLQNGFL) threads the bilayer. Over 28 to 39 (VTMLGREWVRCR) the chain is Cytoplasmic. The chain crosses the membrane as a helical span at residues 40–62 (MLSTSDMIVACLAASRFCLHGVA). Topologically, residues 63-81 (MANNLLASLDFSRAVPYMN) are extracellular. A helical transmembrane segment spans residues 82 to 104 (IFWDLFNALTLWFTALLAAFYCV). The Cytoplasmic portion of the chain corresponds to 105–127 (KISSFSHPTFAWLKWRISRLVPK). Residues 128 to 150 (LIKGSLIICGLEVISSATGNILF) traverse the membrane as a helical segment. Residues 151 to 182 (GQRKVSLSSYRNETLVYRVQASFQLYFFLYDG) lie on the Extracellular side of the membrane. Asn-162 is a glycosylation site (N-linked (GlcNAc...) asparagine). The helical transmembrane segment at 183–205 (FVWSIPFLLFLVSTVLLIVSLCW) threads the bilayer. Residues 206–231 (QLGQMRDLRPGPCDPSTQAYTMALKS) are Cytoplasmic-facing. A helical transmembrane segment spans residues 232–254 (LTFSLIFCTLYFLSLFASALKII). Residues 255–258 (NFQN) are Extracellular-facing. A helical membrane pass occupies residues 259-281 (HWHWAWEVLIYANICLHSTVLVL). At 282-312 (RSPKLKKGLKTWPQLQCPCDAGSQGFGRCWP) the chain is on the cytoplasmic side.

Belongs to the G-protein coupled receptor T2R family.

It localises to the membrane. Receptor that may play a role in the perception of bitterness and is gustducin-linked. May play a role in sensing the chemical composition of the gastrointestinal content. The activity of this receptor may stimulate alpha gustducin, mediate PLC-beta-2 activation and lead to the gating of TRPM5. In Pan paniscus (Pygmy chimpanzee), this protein is Taste receptor type 2 member 62 (TAS2R62).